A 113-amino-acid polypeptide reads, in one-letter code: Ig heavy chain V-III region ABE-47N (113 aa).

Residues 1–113 (EVKLEESGGG…YWGQGTLVTV (113 aa)) enclose the Ig-like domain. Cys22 and Cys98 are disulfide-bonded.

The protein is Ig heavy chain V-III region ABE-47N of Mus musculus (Mouse).